Consider the following 148-residue polypeptide: Small ribosomal subunit protein bS6 (148 aa).

Residues 96–148 form a disordered region; sequence HEEGQSAMLTRRDDRRERDGDDRPRRREGGFDRGDRGDRGPRRPRDTEAGEGA.

It belongs to the bacterial ribosomal protein bS6 family.

In terms of biological role, binds together with bS18 to 16S ribosomal RNA. The sequence is that of Small ribosomal subunit protein bS6 from Brucella canis (strain ATCC 23365 / NCTC 10854 / RM-666).